Here is a 239-residue protein sequence, read N- to C-terminus: Pyridoxine 5'-phosphate synthase (239 aa).

Asparagine 9 is a 3-amino-2-oxopropyl phosphate binding site. Position 11–12 (11–12 (DH)) interacts with 1-deoxy-D-xylulose 5-phosphate. Arginine 20 is a binding site for 3-amino-2-oxopropyl phosphate. The Proton acceptor role is filled by histidine 45. The 1-deoxy-D-xylulose 5-phosphate site is built by arginine 47 and histidine 52. Catalysis depends on glutamate 72, which acts as the Proton acceptor. Threonine 102 is a 1-deoxy-D-xylulose 5-phosphate binding site. The Proton donor role is filled by histidine 189. 3-amino-2-oxopropyl phosphate contacts are provided by residues glycine 190 and 211–212 (GH).

Belongs to the PNP synthase family. In terms of assembly, homooctamer; tetramer of dimers.

It localises to the cytoplasm. It carries out the reaction 3-amino-2-oxopropyl phosphate + 1-deoxy-D-xylulose 5-phosphate = pyridoxine 5'-phosphate + phosphate + 2 H2O + H(+). It functions in the pathway cofactor biosynthesis; pyridoxine 5'-phosphate biosynthesis; pyridoxine 5'-phosphate from D-erythrose 4-phosphate: step 5/5. Catalyzes the complicated ring closure reaction between the two acyclic compounds 1-deoxy-D-xylulose-5-phosphate (DXP) and 3-amino-2-oxopropyl phosphate (1-amino-acetone-3-phosphate or AAP) to form pyridoxine 5'-phosphate (PNP) and inorganic phosphate. This is Pyridoxine 5'-phosphate synthase from Ehrlichia chaffeensis (strain ATCC CRL-10679 / Arkansas).